The primary structure comprises 782 residues: E3 UFM1-protein ligase 1 homolog (782 aa).

Residues 405 to 478 are disordered; that stretch reads VSTQELEDDG…TRGGGGASKK (74 aa).

The protein belongs to the UFL1 family.

Functionally, E3 UFM1-protein ligase that mediates ufmylation of target proteins. The chain is E3 UFM1-protein ligase 1 homolog from Drosophila simulans (Fruit fly).